The sequence spans 322 residues: Ferredoxin--NADP reductase (322 aa).

FAD contacts are provided by Glu37, Gln45, Tyr50, Ile91, Phe128, and Asp290.

It belongs to the ferredoxin--NADP reductase type 2 family. Homodimer. It depends on FAD as a cofactor.

The enzyme catalyses 2 reduced [2Fe-2S]-[ferredoxin] + NADP(+) + H(+) = 2 oxidized [2Fe-2S]-[ferredoxin] + NADPH. The sequence is that of Ferredoxin--NADP reductase from Malacoplasma penetrans (strain HF-2) (Mycoplasma penetrans).